Consider the following 525-residue polypeptide: GMP synthase [glutamine-hydrolyzing] (525 aa).

The region spanning 9–207 (RILILDFGSQ…VRDICQCEAL (199 aa)) is the Glutamine amidotransferase type-1 domain. Residue Cys86 is the Nucleophile of the active site. Residues His181 and Glu183 contribute to the active site. The region spanning 208 to 400 (WTPAKIIDDA…LGLPYDMLYR (193 aa)) is the GMPS ATP-PPase domain. ATP is bound at residue 235-241 (SGGVDSS).

Homodimer.

The catalysed reaction is XMP + L-glutamine + ATP + H2O = GMP + L-glutamate + AMP + diphosphate + 2 H(+). It functions in the pathway purine metabolism; GMP biosynthesis; GMP from XMP (L-Gln route): step 1/1. Its function is as follows. Catalyzes the synthesis of GMP from XMP. The chain is GMP synthase [glutamine-hydrolyzing] from Enterobacter sp. (strain 638).